The chain runs to 184 residues: ATP synthase subunit b, chloroplastic (184 aa).

A helical transmembrane segment spans residues 27-49; it reads LATNPINLSVVLGVLIFFGKGVL.

Belongs to the ATPase B chain family. F-type ATPases have 2 components, F(1) - the catalytic core - and F(0) - the membrane proton channel. F(1) has five subunits: alpha(3), beta(3), gamma(1), delta(1), epsilon(1). F(0) has four main subunits: a(1), b(1), b'(1) and c(10-14). The alpha and beta chains form an alternating ring which encloses part of the gamma chain. F(1) is attached to F(0) by a central stalk formed by the gamma and epsilon chains, while a peripheral stalk is formed by the delta, b and b' chains.

Its subcellular location is the plastid. The protein localises to the chloroplast thylakoid membrane. Its function is as follows. F(1)F(0) ATP synthase produces ATP from ADP in the presence of a proton or sodium gradient. F-type ATPases consist of two structural domains, F(1) containing the extramembraneous catalytic core and F(0) containing the membrane proton channel, linked together by a central stalk and a peripheral stalk. During catalysis, ATP synthesis in the catalytic domain of F(1) is coupled via a rotary mechanism of the central stalk subunits to proton translocation. In terms of biological role, component of the F(0) channel, it forms part of the peripheral stalk, linking F(1) to F(0). In Gossypium barbadense (Sea Island cotton), this protein is ATP synthase subunit b, chloroplastic.